Reading from the N-terminus, the 470-residue chain is L-seryl-tRNA(Sec) selenium transferase (470 aa).

N6-(pyridoxal phosphate)lysine is present on Lys292.

This sequence belongs to the SelA family. The cofactor is pyridoxal 5'-phosphate.

The protein resides in the cytoplasm. The enzyme catalyses L-seryl-tRNA(Sec) + selenophosphate + H(+) = L-selenocysteinyl-tRNA(Sec) + phosphate. It functions in the pathway aminoacyl-tRNA biosynthesis; selenocysteinyl-tRNA(Sec) biosynthesis; selenocysteinyl-tRNA(Sec) from L-seryl-tRNA(Sec) (bacterial route): step 1/1. Converts seryl-tRNA(Sec) to selenocysteinyl-tRNA(Sec) required for selenoprotein biosynthesis. The polypeptide is L-seryl-tRNA(Sec) selenium transferase (Moorella thermoacetica (strain ATCC 39073 / JCM 9320)).